The chain runs to 285 residues: Sulfoquinovosyl glycerol transport system permease protein SmoH (285 aa).

6 consecutive transmembrane segments (helical) span residues 21 to 41, 83 to 103, 115 to 135, 150 to 170, 195 to 215, and 250 to 270; these read FIAA…ILFT, FMVA…AAYA, ILSL…VPLF, LILP…VSFF, VVVP…FVNA, and PVIS…IVIF. Residues 79 to 270 form the ABC transmembrane type-1 domain; the sequence is LFNSFMVALL…VPVAILIVIF (192 aa).

Belongs to the binding-protein-dependent transport system permease family. The complex is probably composed of two ATP-binding proteins (SmoE), two transmembrane proteins (SmoG and SmoH) and a solute-binding protein (SmoF).

It is found in the cell inner membrane. Its function is as follows. Part of the ABC transporter complex SmoEFGH involved in sulfoquinovosyl glycerol (SQGro) uptake. Responsible for the translocation of the substrate across the membrane. The polypeptide is Sulfoquinovosyl glycerol transport system permease protein SmoH (Agrobacterium fabrum (strain C58 / ATCC 33970) (Agrobacterium tumefaciens (strain C58))).